A 339-amino-acid polypeptide reads, in one-letter code: DNA-directed RNA polymerase subunit alpha (339 aa).

The interval 1–233 (MVREEVAGST…DLFLPFLHAE (233 aa)) is alpha N-terminal domain (alpha-NTD). Positions 264–339 (KKGIPLNCIF…IDLLKNKLSF (76 aa)) are alpha C-terminal domain (alpha-CTD).

This sequence belongs to the RNA polymerase alpha chain family. In terms of assembly, in plastids the minimal PEP RNA polymerase catalytic core is composed of four subunits: alpha, beta, beta', and beta''. When a (nuclear-encoded) sigma factor is associated with the core the holoenzyme is formed, which can initiate transcription.

It localises to the plastid. The protein resides in the chloroplast. The enzyme catalyses RNA(n) + a ribonucleoside 5'-triphosphate = RNA(n+1) + diphosphate. DNA-dependent RNA polymerase catalyzes the transcription of DNA into RNA using the four ribonucleoside triphosphates as substrates. The polypeptide is DNA-directed RNA polymerase subunit alpha (Eremopyrum distans).